The primary structure comprises 172 residues: C-phycocyanin beta chain (172 aa).

(2R,3E)-phycocyanobilin-binding positions include Asn-35, Asp-39, Asn-72, Arg-77, Cys-82, 82 to 88 (CLRDMEI), 149 to 151 (TTG), and Cys-153. The residue at position 72 (Asn-72) is an N4-methylasparagine.

This sequence belongs to the phycobiliprotein family. In terms of assembly, heterodimer of an alpha and a beta subunit. Dimers further assemble into trimers and the trimers into hexamers. The basic functional unit of phycobiliproteins is a ring-shaped hexamer formed from two back-to-back trimers contacting via the alpha chain subunits. The trimers are composed of alpha/beta subunit heterodimers arranged around a three-fold axis of symmetry. The phycoerythrins also contain a gamma subunit which is located in the center of the hexamer. Contains two covalently linked phycocyanobilin chromophores.

It localises to the plastid. It is found in the chloroplast thylakoid membrane. Its function is as follows. Light-harvesting photosynthetic tetrapyrrole chromophore-protein from the phycobiliprotein complex (phycobilisome, PBS). Phycocyanin is the major phycobiliprotein in the PBS rod. The chain is C-phycocyanin beta chain (cpcB) from Galdieria sulphuraria (Red alga).